A 450-amino-acid polypeptide reads, in one-letter code: uncharacterized protein (450 aa).

Over residues 387–416 (ELDEKNNNKEENKNQDLHEPKESSSEDLLK) the composition is skewed to basic and acidic residues. A disordered region spans residues 387-439 (ELDEKNNNKEENKNQDLHEPKESSSEDLLKRLNNLKINTNEGPVQDNENHDNE).

This is an uncharacterized protein from Saccharomyces cerevisiae (strain ATCC 204508 / S288c) (Baker's yeast).